Here is a 930-residue protein sequence, read N- to C-terminus: Isoleucine--tRNA ligase (930 aa).

The 'HIGH' region motif lies at 57–67; the sequence is PYANGNIHVGH. Residue glutamate 554 coordinates L-isoleucyl-5'-AMP. A 'KMSKS' region motif is present at residues 595–599; it reads KMSKS. Residue lysine 598 participates in ATP binding. Positions 888, 891, 908, and 911 each coordinate Zn(2+).

This sequence belongs to the class-I aminoacyl-tRNA synthetase family. IleS type 1 subfamily. In terms of assembly, monomer. It depends on Zn(2+) as a cofactor.

It is found in the cytoplasm. The catalysed reaction is tRNA(Ile) + L-isoleucine + ATP = L-isoleucyl-tRNA(Ile) + AMP + diphosphate. In terms of biological role, catalyzes the attachment of isoleucine to tRNA(Ile). As IleRS can inadvertently accommodate and process structurally similar amino acids such as valine, to avoid such errors it has two additional distinct tRNA(Ile)-dependent editing activities. One activity is designated as 'pretransfer' editing and involves the hydrolysis of activated Val-AMP. The other activity is designated 'posttransfer' editing and involves deacylation of mischarged Val-tRNA(Ile). This is Isoleucine--tRNA ligase from Streptococcus mutans serotype c (strain ATCC 700610 / UA159).